Reading from the N-terminus, the 434-residue chain is Nucleobase transporter PlUacP (434 aa).

The next 12 membrane-spanning stretches (helical) occupy residues 9 to 29, 39 to 59, 63 to 83, 93 to 113, 118 to 138, 159 to 179, 181 to 201, 218 to 238, 306 to 326, 327 to 347, 365 to 385, and 394 to 414; these read LGFQ…LIVG, LAYL…LQVW, FFGI…GPMI, AIYG…GFFG, FFPP…LIPV, ALSF…TGFI, AISI…MGKV, FYFG…LVAI, VVIT…IAAL, TLLI…GMVV, LLII…PNLF, and ILTS…NFLF.

The protein belongs to the nucleobase:cation symporter-2 (NCS2) (TC 2.A.40) family.

It localises to the cell membrane. With respect to regulation, inhibited by the proton gradient disruptor carbonyl cyanide m-chlorophenylhydrazone (CCCP), but not by the sodium gradient disruptor ouabain. Hypoxanthine, xanthine, cytosine and uric acid act as competitive inhibitors. Uptake of the purines adenine and guanine, and the pyrimidine uracil. Transport is probably proton-dependent. The polypeptide is Nucleobase transporter PlUacP (Paenibacillus larvae subsp. larvae (strain NRRL B-3650 / LMG 16245)).